A 647-amino-acid polypeptide reads, in one-letter code: Neutral endopeptidase (647 aa).

Residues Met1 to Trp647 enclose the Peptidase M13 domain. Position 496 (His496) interacts with Zn(2+). Glu497 is a catalytic residue. Zn(2+) contacts are provided by His500 and Glu556. Asp560 acts as the Proton donor in catalysis.

Belongs to the peptidase M13 family. Zn(2+) serves as cofactor.

In Lactobacillus helveticus (Lactobacillus suntoryeus), this protein is Neutral endopeptidase (pepO).